The following is a 140-amino-acid chain: Nucleoside diphosphate kinase (140 aa).

ATP contacts are provided by lysine 11, phenylalanine 59, arginine 87, threonine 93, arginine 104, and asparagine 114. The Pros-phosphohistidine intermediate role is filled by histidine 117.

It belongs to the NDK family. In terms of assembly, homotetramer. Mg(2+) serves as cofactor.

It localises to the cytoplasm. It carries out the reaction a 2'-deoxyribonucleoside 5'-diphosphate + ATP = a 2'-deoxyribonucleoside 5'-triphosphate + ADP. The enzyme catalyses a ribonucleoside 5'-diphosphate + ATP = a ribonucleoside 5'-triphosphate + ADP. Major role in the synthesis of nucleoside triphosphates other than ATP. The ATP gamma phosphate is transferred to the NDP beta phosphate via a ping-pong mechanism, using a phosphorylated active-site intermediate. In Methylobacterium radiotolerans (strain ATCC 27329 / DSM 1819 / JCM 2831 / NBRC 15690 / NCIMB 10815 / 0-1), this protein is Nucleoside diphosphate kinase.